We begin with the raw amino-acid sequence, 469 residues long: uncharacterized protein (469 aa).

This is an uncharacterized protein from Methanocaldococcus jannaschii (strain ATCC 43067 / DSM 2661 / JAL-1 / JCM 10045 / NBRC 100440) (Methanococcus jannaschii).